A 729-amino-acid chain; its full sequence is Isocitrate dehydrogenase [NADP] (729 aa).

NADP(+) is bound by residues asparagine 83 and serine 85. 5 residues coordinate D-threo-isocitrate: serine 121, asparagine 124, arginine 128, arginine 134, and lysine 244. Asparagine 124 is a binding site for NADP(+). Aspartate 337 contacts Mg(2+). Positions 407 and 534 each coordinate D-threo-isocitrate. Positions 535 and 539 each coordinate Mg(2+). Positions 572, 576, 587, 589, and 636 each coordinate NADP(+).

This sequence belongs to the monomeric-type IDH family. Monomer. Mg(2+) serves as cofactor. Mn(2+) is required as a cofactor.

The enzyme catalyses D-threo-isocitrate + NADP(+) = 2-oxoglutarate + CO2 + NADPH. Functionally, catalyzes the oxidative decarboxylation of isocitrate to 2-oxoglutarate and carbon dioxide with the concomitant reduction of NADP(+). The polypeptide is Isocitrate dehydrogenase [NADP] (Corynebacterium efficiens (strain DSM 44549 / YS-314 / AJ 12310 / JCM 11189 / NBRC 100395)).